The primary structure comprises 147 residues: Protein-export protein SecB 2 (147 aa).

This sequence belongs to the SecB family. As to quaternary structure, homotetramer, a dimer of dimers. One homotetramer interacts with 1 SecA dimer.

The protein localises to the cytoplasm. Its function is as follows. One of the proteins required for the normal export of preproteins out of the cell cytoplasm. It is a molecular chaperone that binds to a subset of precursor proteins, maintaining them in a translocation-competent state. It also specifically binds to its receptor SecA. This chain is Protein-export protein SecB 2, found in Francisella tularensis subsp. novicida (strain U112).